A 1082-amino-acid polypeptide reads, in one-letter code: Mediator of RNA polymerase II transcription subunit 14 (1082 aa).

Disordered stretches follow at residues 1–80 and 319–343; these read MTTT…APPP and EATS…NLPL. Thr2 is modified (N-acetylthreonine). A Phosphoserine modification is found at Ser7. A compositionally biased stretch (basic and acidic residues) spans 13–28; it reads NEERLSNEMHALKNRS. Residues 29–59 show a composition bias toward polar residues; it reads EQNGQEQQGPVKNTQLHGPSATDPETTATQK. Residues 321 to 340 show a composition bias toward low complexity; the sequence is TSTNGDSENNEENSSSNGNN. Thr1036 is subject to Phosphothreonine.

Belongs to the Mediator complex subunit 14 family. Component of the Mediator complex, which is composed of at least 21 subunits that form three structurally distinct submodules. The Mediator head module contains MED6, MED8, MED11, SRB4/MED17, SRB5/MED18, ROX3/MED19, SRB2/MED20 and SRB6/MED22, the middle module contains MED1, MED4, NUT1/MED5, MED7, CSE2/MED9, NUT2/MED10, SRB7/MED21 and SOH1/MED31, and the tail module contains MED2, PGD1/MED3, RGR1/MED14, GAL11/MED15 and SIN4/MED16. The head and the middle modules interact directly with RNA polymerase II, whereas the elongated tail module interacts with gene-specific regulatory proteins.

Its subcellular location is the nucleus. Component of the Mediator complex, a coactivator involved in the regulated transcription of nearly all RNA polymerase II-dependent genes. Mediator functions as a bridge to convey information from gene-specific regulatory proteins to the basal RNA polymerase II transcription machinery. The Mediator complex, having a compact conformation in its free form, is recruited to promoters by direct interactions with regulatory proteins and serves for the assembly of a functional preinitiation complex with RNA polymerase II and the general transcription factors. The Mediator complex unfolds to an extended conformation and partially surrounds RNA polymerase II, specifically interacting with the unphosphorylated form of the C-terminal domain (CTD) of RNA polymerase II. The Mediator complex dissociates from the RNA polymerase II holoenzyme and stays at the promoter when transcriptional elongation begins. The polypeptide is Mediator of RNA polymerase II transcription subunit 14 (RGR1) (Saccharomyces cerevisiae (strain ATCC 204508 / S288c) (Baker's yeast)).